We begin with the raw amino-acid sequence, 459 residues long: DNA damage-inducible protein F (459 aa).

The next 12 helical transmembrane spans lie at 2-22 (PPGV…MAFL), 29-49 (LWHL…LGLV), 63-83 (LGGV…LLFL), 111-131 (LLLA…IIDL), 154-174 (WLSA…LGVQ), 180-200 (VILL…LVMG), 207-227 (GAAL…LLMV), 265-285 (LLQL…SDII), 289-309 (AVLM…AYAV), 338-358 (IVAL…IALL), 373-393 (IWQV…GMFI), and 416-436 (LLTL…VFLA).

Belongs to the multi antimicrobial extrusion (MATE) (TC 2.A.66.1) family.

The protein localises to the cell inner membrane. The protein is DNA damage-inducible protein F (dinF) of Escherichia coli (strain K12).